A 371-amino-acid polypeptide reads, in one-letter code: Bifunctional enzyme IspD/IspF (371 aa).

A 2-C-methyl-D-erythritol 4-phosphate cytidylyltransferase region spans residues 1-214; the sequence is MNSCFIILAG…NSDIKFNNLI (214 aa). A 2-C-methyl-D-erythritol 2,4-cyclodiphosphate synthase region spans residues 215 to 371; that stretch reads KFGIGFDVHR…EVIASVIKND (157 aa). The a divalent metal cation site is built by Asp221 and His223. 4-CDP-2-C-methyl-D-erythritol 2-phosphate-binding positions include 221–223 and 247–248; these read DVH and HS. His255 contributes to the a divalent metal cation binding site. 4-CDP-2-C-methyl-D-erythritol 2-phosphate-binding positions include 269-271, 274-278, and Lys355; these read DIG and FSDKN.

It in the N-terminal section; belongs to the IspD/TarI cytidylyltransferase family. IspD subfamily. In the C-terminal section; belongs to the IspF family. A divalent metal cation is required as a cofactor.

The catalysed reaction is 2-C-methyl-D-erythritol 4-phosphate + CTP + H(+) = 4-CDP-2-C-methyl-D-erythritol + diphosphate. The enzyme catalyses 4-CDP-2-C-methyl-D-erythritol 2-phosphate = 2-C-methyl-D-erythritol 2,4-cyclic diphosphate + CMP. The protein operates within isoprenoid biosynthesis; isopentenyl diphosphate biosynthesis via DXP pathway; isopentenyl diphosphate from 1-deoxy-D-xylulose 5-phosphate: step 2/6. It functions in the pathway isoprenoid biosynthesis; isopentenyl diphosphate biosynthesis via DXP pathway; isopentenyl diphosphate from 1-deoxy-D-xylulose 5-phosphate: step 4/6. Functionally, bifunctional enzyme that catalyzes the formation of 4-diphosphocytidyl-2-C-methyl-D-erythritol from CTP and 2-C-methyl-D-erythritol 4-phosphate (MEP) (IspD), and catalyzes the conversion of 4-diphosphocytidyl-2-C-methyl-D-erythritol 2-phosphate (CDP-ME2P) to 2-C-methyl-D-erythritol 2,4-cyclodiphosphate (ME-CPP) with a corresponding release of cytidine 5-monophosphate (CMP) (IspF). The sequence is that of Bifunctional enzyme IspD/IspF from Pelagibacter ubique (strain HTCC1062).